The sequence spans 200 residues: MALAYDGAIQRLIDAFANLPGIGPKGAQRIAFYLLNAPDEESQALIDAITEVKEKVRFCDICGNVCETSPCPVCADPRRDHSVICVVEEPKDVMSIERTREYRGMYHVLGGVINPMANVQPSDLNIAKLIERLKDSEVKEVILALNPNVEGEATTSFLSQLLSQTDIKVTRLASGLPVGGDLEYADEITLGRALAGRRAV.

Residues 59-74 (CDICGNVCETSPCPVC) form a C4-type zinc finger. A Toprim domain is found at 82–177 (SVICVVEEPK…KVTRLASGLP (96 aa)).

Belongs to the RecR family.

Its function is as follows. May play a role in DNA repair. It seems to be involved in an RecBC-independent recombinational process of DNA repair. It may act with RecF and RecO. The chain is Recombination protein RecR from Bifidobacterium adolescentis (strain ATCC 15703 / DSM 20083 / NCTC 11814 / E194a).